Consider the following 282-residue polypeptide: Aquaporin PIP2-7 (282 aa).

The tract at residues 1–21 (MSKEVSVEGEQPPVKDYTDPP) is disordered. At 1–38 (MSKEVSVEGEQPPVKDYTDPPPEPLLNFGELRLWSFYR) the chain is on the cytoplasmic side. The chain crosses the membrane as a helical span at residues 39–59 (ALIAEFVATLLFLYVTIATVI). The Extracellular segment spans residues 60 to 71 (GHKEQNAADQCS). The helical transmembrane segment at 72-92 (GVGLLGIAWAFGGMIFILVYC) threads the bilayer. Over 93-120 (TAGISGGHINPAVTLGLFLARKVSLIRA) the chain is Cytoplasmic. An NPA 1 motif is present at residues 102–104 (NPA). Residues 121-141 (LLYMVAQCLGAIVGVGIVKGI) traverse the membrane as a helical segment. Topologically, residues 142–162 (MKHQYNSLGGGANVVAAGYSK) are extracellular. Residues 163 to 183 (GTALGAEIIGTFVLVYTVFSA) traverse the membrane as a helical segment. Residues 184–196 (TDPKRSARDSHVP) are Cytoplasmic-facing. A helical transmembrane segment spans residues 197–217 (VLAPLPIGFAVFMVHLATIPI). Topologically, residues 218–244 (TGTGINPARSLGAAVIYNQDKPWDDHW) are extracellular. An NPA 2 motif is present at residues 223-225 (NPA). A helical membrane pass occupies residues 245-265 (ILWVGPFVGALAAAAYHQYIL). Residues 266–282 (RAAAIKALGSFRSNPSN) lie on the Cytoplasmic side of the membrane.

Belongs to the MIP/aquaporin (TC 1.A.8) family. PIP (TC 1.A.8.11) subfamily. As to expression, expressed in roots, leaves and fruits.

Its subcellular location is the cell membrane. Its function is as follows. Water channel required to facilitate the transport of water across cell membrane; mercury-insensitive. Contributes to the tolerance to multiple abiotic stresses including salt (NaCl), cold and water deprivation, by modulating cytosolic K(+)/Na(+) ratio, maintaining osmotic balance, and reducing membrane injury (e.g. oxidative injury). Also regulates the expression of abscisic acid (ABA)- biosynthetic and -responsive genes during dehydration and salt stresses. The sequence is that of Aquaporin PIP2-7 from Musa acuminata (Banana).